The primary structure comprises 152 residues: Aspartate carbamoyltransferase regulatory chain (152 aa).

Zn(2+) contacts are provided by Cys108, Cys113, Cys137, and Cys140.

It belongs to the PyrI family. As to quaternary structure, contains catalytic and regulatory chains. It depends on Zn(2+) as a cofactor.

In terms of biological role, involved in allosteric regulation of aspartate carbamoyltransferase. This is Aspartate carbamoyltransferase regulatory chain from Neisseria gonorrhoeae (strain ATCC 700825 / FA 1090).